The following is a 133-amino-acid chain: Cytochrome b5 (133 aa).

The 83-residue stretch at 4-86 (EKEYILDEIS…LKNYLVGNFK (83 aa)) folds into the Cytochrome b5 heme-binding domain. 2 residues coordinate heme: histidine 45 and histidine 69. Residues 108–128 (SGTGIMLIVLMALFAIAYGYY) form a helical membrane-spanning segment.

It belongs to the cytochrome b5 family. As to quaternary structure, interacts with alternative squalene epoxidase PHATRDRAFT_45494.

The protein localises to the endoplasmic reticulum membrane. Functionally, hemoprotein that functions as an electron carrier for membrane bound monooxygenases involved in sterol biosynthesis. This Phaeodactylum tricornutum (strain CCAP 1055/1) protein is Cytochrome b5.